A 535-amino-acid chain; its full sequence is D-2-hydroxyglutarate dehydrogenase, mitochondrial (535 aa).

The transit peptide at 1–50 (MVLHLVPRWSASLFRASPRWKKTYSQRASAQLKWLGCPRSVYSPLACRAY) directs the protein to the mitochondrion. Residues 110-289 (VRGCSKVLLR…TAVSIVCPPR (180 aa)) form the FAD-binding PCMH-type domain. Lysine 115 is modified (N6-succinyllysine). Arginine 400, threonine 404, and lysine 415 together coordinate (R)-2-hydroxyglutarate. Residue arginine 400 participates in (R)-lactate binding. (R)-malate is bound by residues arginine 400, threonine 404, and lysine 415. Zn(2+) contacts are provided by histidine 448 and histidine 455. Asparagine 457 contacts (R)-2-hydroxyglutarate. Glutamate 489 contributes to the Zn(2+) binding site. Histidine 490 contacts (R)-2-hydroxyglutarate. Position 490 (histidine 490) interacts with (R)-lactate. Histidine 490 contacts (R)-malate.

Belongs to the FAD-binding oxidoreductase/transferase type 4 family. It depends on FAD as a cofactor.

Its subcellular location is the mitochondrion. The catalysed reaction is (R)-2-hydroxyglutarate + A = 2-oxoglutarate + AH2. It catalyses the reaction (R)-malate + A = oxaloacetate + AH2. Activated by zinc, cobalt and manganese ions. Inhibited by EDTA. In terms of biological role, catalyzes the oxidation of D-2-hydroxyglutarate (D-2-HG) to alpha-ketoglutarate. Also catalyzes the oxidation of other D-2-hydroxyacids, such as D-malate (D-MAL) and D-lactate (D-LAC). Exhibits high activities towards D-2-HG and D-MAL but a very weak activity towards D-LAC. The chain is D-2-hydroxyglutarate dehydrogenase, mitochondrial from Rattus norvegicus (Rat).